A 332-amino-acid polypeptide reads, in one-letter code: Eukaryotic translation initiation factor 3 subunit I (332 aa).

WD repeat units lie at residues 8–47 (GHERALTQVKYNGDGDIIFSVSKDHVDADSHNGERIGTYH), 48–87 (GHQGALWTVDVNPDSTLLATGGADNTLRLWEVQTGKLLHT), 144–182 (DESKATVAGFSYLAKYIISGHEDGSVTQWDGKTGELLSS), and 279–318 (GHFGPLNYVAVHPQGTGYCSGGEDGYVRVHHFDKPYFDFM).

The protein belongs to the eIF-3 subunit I family. In terms of assembly, component of the eukaryotic translation initiation factor 3 (eIF-3) complex.

Its subcellular location is the cytoplasm. Functionally, component of the eukaryotic translation initiation factor 3 (eIF-3) complex, which is involved in protein synthesis of a specialized repertoire of mRNAs and, together with other initiation factors, stimulates binding of mRNA and methionyl-tRNAi to the 40S ribosome. The eIF-3 complex specifically targets and initiates translation of a subset of mRNAs involved in cell proliferation. The polypeptide is Eukaryotic translation initiation factor 3 subunit I (Phaeosphaeria nodorum (strain SN15 / ATCC MYA-4574 / FGSC 10173) (Glume blotch fungus)).